The primary structure comprises 89 residues: Phosphocarrier protein HPr (89 aa).

The region spanning 1–89 is the HPr domain; sequence MERTVTVVPE…DILSTPEAKQ (89 aa). The Pros-phosphohistidine intermediate role is filled by histidine 14. Serine 47 bears the Phosphoserine; by HPrK/P mark.

Belongs to the HPr family.

It is found in the cytoplasm. With respect to regulation, phosphorylation on Ser-47 inhibits the phosphoryl transfer from enzyme I to HPr. Functionally, general (non sugar-specific) component of the phosphoenolpyruvate-dependent sugar phosphotransferase system (sugar PTS). This major carbohydrate active-transport system catalyzes the phosphorylation of incoming sugar substrates concomitantly with their translocation across the cell membrane. The phosphoryl group from phosphoenolpyruvate (PEP) is transferred to the phosphoryl carrier protein HPr by enzyme I. Phospho-HPr then transfers it to the PTS EIIA domain. Is involved in fructose transport. This Haloferax volcanii (strain ATCC 29605 / DSM 3757 / JCM 8879 / NBRC 14742 / NCIMB 2012 / VKM B-1768 / DS2) (Halobacterium volcanii) protein is Phosphocarrier protein HPr (ptsH1).